Consider the following 232-residue polypeptide: MGKLTKNQKLAAEKIEAGKAYSLKEAAQLVKDITFSKFDASLDIDVRLGVDPRKANQMVRGVVSLPHGTGKQVRVLVLCTPDAEAAAKEAGADYVGLDEYIEKIKGGWTDIDVIITMPSIMGKIGALGRVLGPRGLMPNPKSGTVTMDVAKAVKEVKQGKIDFKVDKSGIVHTSIGKVSFTADQIRDNAKEFIATIIKLKPSSAKGTYIKSIYLSSTMSKGIKIDPKTVEEN.

It belongs to the universal ribosomal protein uL1 family. As to quaternary structure, part of the 50S ribosomal subunit.

Binds directly to 23S rRNA. The L1 stalk is quite mobile in the ribosome, and is involved in E site tRNA release. In terms of biological role, protein L1 is also a translational repressor protein, it controls the translation of the L11 operon by binding to its mRNA. The polypeptide is Large ribosomal subunit protein uL1 (Phocaeicola vulgatus (strain ATCC 8482 / DSM 1447 / JCM 5826 / CCUG 4940 / NBRC 14291 / NCTC 11154) (Bacteroides vulgatus)).